Reading from the N-terminus, the 150-residue chain is uncharacterized protein (150 aa).

The signal sequence occupies residues 1–23; that stretch reads MYSILIACLVLLLCLIIYVGHRA.

Belongs to the asfivirus EP152R family.

It localises to the virion. This is an uncharacterized protein from African swine fever virus (isolate Tick/South Africa/Pretoriuskop Pr4/1996) (ASFV).